Reading from the N-terminus, the 530-residue chain is uncharacterized protein (530 aa).

The interval 1-33 (MNNMSLKFPDIAINSSESSDDEDPSSKNEKKDG) is disordered. Over residues 24–33 (PSSKNEKKDG) the composition is skewed to basic and acidic residues. A run of 12 helical transmembrane segments spans residues 83–103 (FFIL…KTAV), 124–144 (WLST…GYLL), 147–167 (FPIS…VLLM), 181–201 (FFSG…TAMW), 211–231 (VVSW…LGYG), 244–264 (YPFL…LFFP), 323–343 (VTNA…YSGI), 346–366 (TLLT…SGIF), 375–395 (IPLA…IWKI), 404–424 (VVGV…LSLL), 436–456 (TVNA…PQLF), and 471–491 (SLVS…YYIF).

It belongs to the major facilitator superfamily. Allantoate permease family.

The protein resides in the endoplasmic reticulum. Its subcellular location is the membrane. This is an uncharacterized protein from Schizosaccharomyces pombe (strain 972 / ATCC 24843) (Fission yeast).